The primary structure comprises 356 residues: Phosphoribosylformylglycinamidine cyclo-ligase (356 aa).

This sequence belongs to the AIR synthase family.

The protein localises to the cytoplasm. It catalyses the reaction 2-formamido-N(1)-(5-O-phospho-beta-D-ribosyl)acetamidine + ATP = 5-amino-1-(5-phospho-beta-D-ribosyl)imidazole + ADP + phosphate + H(+). The protein operates within purine metabolism; IMP biosynthesis via de novo pathway; 5-amino-1-(5-phospho-D-ribosyl)imidazole from N(2)-formyl-N(1)-(5-phospho-D-ribosyl)glycinamide: step 2/2. This chain is Phosphoribosylformylglycinamidine cyclo-ligase, found in Sinorhizobium fredii (strain NBRC 101917 / NGR234).